The chain runs to 882 residues: Piwi-like protein 3 (882 aa).

Basic residues predominate over residues 1–15 (MPGRARTRARGRARR). A disordered region spans residues 1–91 (MPGRARTRAR…EAGLHTAPLQ (91 aa)). The segment covering 32 to 46 (SATTQEPPQLQSTPR) has biased composition (polar residues). Positions 293–406 (TAYDFIKRTS…LIPQLCHMTG (114 aa)) constitute a PAZ domain. Residues 578–868 (KVICILPNDD…LAYLVGQSIH (291 aa)) form the Piwi domain.

Belongs to the argonaute family. Piwi subfamily. As to expression, expressed in testis.

It localises to the cytoplasm. Functionally, may play a role during spermatogenesis by repressing transposable elements and preventing their mobilization, which is essential for the germline integrity. Acts via the piRNA metabolic process, which mediates the repression of transposable elements during meiosis by forming complexes composed of piRNAs and Piwi proteins and govern the methylation and subsequent repression of transposons. Directly binds piRNAs, a class of 24 to 30 nucleotide RNAs that are generated by a Dicer-independent mechanism and are primarily derived from transposons and other repeated sequence elements. Besides their function in transposable elements repression, piRNAs are probably involved in other processes during meiosis such as translation regulation. This chain is Piwi-like protein 3 (PIWIL3), found in Homo sapiens (Human).